Here is a 1685-residue protein sequence, read N- to C-terminus: Myomesin-1 (1685 aa).

A disordered region spans residues 33 to 80 (KKRSAVYTQGSTAYSSRSSAAHRRESEAFRRASASSSQQQASQHALSS). Composition is skewed to low complexity over residues 41–51 (QGSTAYSSRSS) and 63–80 (RASA…ALSS). Serine 113 is modified (phosphoserine). Positions 177–244 (GITTSKQSTA…TSEKKSRKVV (68 aa)) are disordered. Residues 179-220 (TTSKQSTASKQTTASKQSTASKQSTASKQSTASRQSTASRQS) are compositionally biased toward low complexity. 6 tandem repeats follow at residues 182-187 (KQSTAS), 188-193 (KQTTAS), 194-199 (KQSTAS), 200-205 (KQSTAS), 206-211 (KQSTAS), and 212-217 (RQSTAS). The tract at residues 182-217 (KQSTASKQTTASKQSTASKQSTASKQSTASRQSTAS) is 6 X 6 AA tandem repeats. The segment covering 221 to 233 (VVSKQATSALQQE) has biased composition (polar residues). 2 Ig-like C2-type domains span residues 277–368 (PEFI…ASVV) and 396–498 (PYGY…AYVF). Fibronectin type-III domains lie at 512 to 607 (APLD…ALDP), 640 to 734 (PPTD…VVGD), and 741 to 834 (APGK…VKAA). The segment at 840–938 (SPDVCPALSD…TDRAPPSPPC (99 aa)) is disordered. A compositionally biased stretch (low complexity) spans 874 to 888 (LLGSKPNKPSLPSSS). 2 positions are modified to phosphoserine: serine 883 and serine 887. The span at 889–902 (QNLGQTEVSKVSET) shows a compositional bias: polar residues. Positions 920 to 931 (SKSDPLKKKTDR) are enriched in basic and acidic residues. Fibronectin type-III domains are found at residues 933 to 1034 (PPSP…CEEW) and 1041 to 1140 (PPHS…TRPG). Serine 1054 is modified (phosphoserine). Ig-like C2-type domains lie at 1132 to 1230 (PVVA…EELK), 1358 to 1444 (PHFV…LKLV), and 1573 to 1662 (RVLG…FTVS). The cysteines at positions 1160 and 1210 are disulfide-linked.

As to quaternary structure, homodimer. Interacts with TTN/titin. Interacts with PNKD.

The protein resides in the cytoplasm. The protein localises to the myofibril. It localises to the sarcomere. It is found in the m line. In terms of biological role, major component of the vertebrate myofibrillar M band. Binds myosin, titin, and light meromyosin. This binding is dose dependent. This is Myomesin-1 (MYOM1) from Homo sapiens (Human).